The chain runs to 518 residues: MKKLKINYLFIGILALLLAVALWPSIPWFGKADNRIAAIQARGELRVSTIHTPLTYNEINGKPFGLDYELAKQFADYLGVKLKVTVRQNISQLFDDLDNGNADLLAAGLVYNSERVKNYQPGPTYYSVSQQLVYKVGQYRPRTLCNLTAEQLTVAPGHVVVNDLQTLKETKFPELSWKVDDKKGSAELMEDVIEGKLDYTIADSVAISLFQRVHPELAVALDITDEQPVTWFSPLDGDNTLSAALLDFFNEMNEDGTLARIEEKYLGHGDDFDYVDTRTFLRAVDAVLPQLKPLFEKYAEEIDWRLLAAIAYQESHWDAQATSPTGVRGMMMLTKNTAQSLGITDRTDAEQSISGGVRYLQDMMSKVPESVPENERIWFALAAYNMGYAHMLDARALTAKTKGNPDSWADVKQRLPLLSQKPYYSKLTYGYARGHEAYAYVENIRKYQISLVGYLQEKEKQATEAAMQLAQDYPAVSPTELGKEKFPFLSFLSQSSSNYLTHSPSLLFSRKGSEEKQN.

The N-terminal stretch at M1–A21 is a signal peptide. Positions L22–G269 are non-LT domain. Positions D270–N518 are LT domain. Residue E314 is part of the active site.

In the N-terminal section; belongs to the bacterial solute-binding protein 3 family. This sequence in the C-terminal section; belongs to the transglycosylase Slt family.

The protein resides in the cell outer membrane. The enzyme catalyses Exolytic cleavage of the (1-&gt;4)-beta-glycosidic linkage between N-acetylmuramic acid (MurNAc) and N-acetylglucosamine (GlcNAc) residues in peptidoglycan, from either the reducing or the non-reducing ends of the peptidoglycan chains, with concomitant formation of a 1,6-anhydrobond in the MurNAc residue.. Its function is as follows. Murein-degrading enzyme that degrades murein glycan strands and insoluble, high-molecular weight murein sacculi, with the concomitant formation of a 1,6-anhydromuramoyl product. Lytic transglycosylases (LTs) play an integral role in the metabolism of the peptidoglycan (PG) sacculus. Their lytic action creates space within the PG sacculus to allow for its expansion as well as for the insertion of various structures such as secretion systems and flagella. The chain is Membrane-bound lytic murein transglycosylase F from Shigella boydii serotype 18 (strain CDC 3083-94 / BS512).